A 266-amino-acid polypeptide reads, in one-letter code: UPF0294 protein YafD (266 aa).

Belongs to the UPF0294 family.

Its subcellular location is the cytoplasm. The polypeptide is UPF0294 protein YafD (Salmonella dublin (strain CT_02021853)).